Consider the following 417-residue polypeptide: uncharacterized protein (417 aa).

The tract at residues 1 to 24 is disordered; it reads MSQPPINPLGQPQVPAAASPSGQP. Transmembrane regions (helical) follow at residues 54-74, 79-99, 117-137, and 143-163; these read VYDT…LLTA, LMLY…TLLI, AIVV…GAFV, and MLVF…LYFM. A compositionally biased stretch (basic and acidic residues) spans 211–228; sequence DLSASARMEEHEASQRQD. 2 disordered regions span residues 211–283 and 308–417; these read DLSA…FKDD and IMPA…RKNK. Residues 312–322 show a composition bias toward polar residues; the sequence is SSRSPNFSTGT. Positions 336–347 are enriched in low complexity; that stretch reads EPSIPRVSSSSR. The segment covering 391–401 has biased composition (polar residues); that stretch reads STANLSPSNPF.

It belongs to the chlamydial CPn_0443/CT_005/TC_0273 family.

The protein resides in the cell membrane. This is an uncharacterized protein from Chlamydia pneumoniae (Chlamydophila pneumoniae).